The sequence spans 73 residues: Translation initiation factor IF-1 3 (73 aa).

One can recognise an S1-like domain in the interval 1 to 72 (MAKEELVEFG…TKGRINYRHK (72 aa)).

Belongs to the IF-1 family. Component of the 30S ribosomal translation pre-initiation complex which assembles on the 30S ribosome in the order IF-2 and IF-3, IF-1 and N-formylmethionyl-tRNA(fMet); mRNA recruitment can occur at any time during PIC assembly.

It is found in the cytoplasm. Functionally, one of the essential components for the initiation of protein synthesis. Stabilizes the binding of IF-2 and IF-3 on the 30S subunit to which N-formylmethionyl-tRNA(fMet) subsequently binds. Helps modulate mRNA selection, yielding the 30S pre-initiation complex (PIC). Upon addition of the 50S ribosomal subunit IF-1, IF-2 and IF-3 are released leaving the mature 70S translation initiation complex. This is Translation initiation factor IF-1 3 from Cupriavidus metallidurans (strain ATCC 43123 / DSM 2839 / NBRC 102507 / CH34) (Ralstonia metallidurans).